The following is a 401-amino-acid chain: Phosphoglycerate kinase (401 aa).

Substrate-binding positions include 21 to 23 (DFN), arginine 36, 59 to 62 (HLGR), arginine 119, and arginine 160. ATP contacts are provided by residues lysine 212, glutamate 330, and 357–360 (GGDS).

It belongs to the phosphoglycerate kinase family. In terms of assembly, monomer.

The protein localises to the cytoplasm. The enzyme catalyses (2R)-3-phosphoglycerate + ATP = (2R)-3-phospho-glyceroyl phosphate + ADP. Its pathway is carbohydrate degradation; glycolysis; pyruvate from D-glyceraldehyde 3-phosphate: step 2/5. This is Phosphoglycerate kinase from Limosilactobacillus fermentum (strain NBRC 3956 / LMG 18251) (Lactobacillus fermentum).